Here is a 230-residue protein sequence, read N- to C-terminus: Large ribosomal subunit protein uL1 (230 aa).

It belongs to the universal ribosomal protein uL1 family. Part of the 50S ribosomal subunit.

In terms of biological role, binds directly to 23S rRNA. The L1 stalk is quite mobile in the ribosome, and is involved in E site tRNA release. Its function is as follows. Protein L1 is also a translational repressor protein, it controls the translation of the L11 operon by binding to its mRNA. The chain is Large ribosomal subunit protein uL1 from Acidiphilium cryptum (strain JF-5).